A 1447-amino-acid polypeptide reads, in one-letter code: Sister chromatid cohesion protein PDS5 homolog B (1447 aa).

An HEAT repeat occupies 383–419; it reads LLVNDHLLNFVRERTLDKRWRVRKEAMMGLAQIYKKY. The segment at 1117–1447 is disordered; the sequence is KSFFTPGKPK…RRRSAKRERR (331 aa). Lysine 1136 carries the N6-acetyllysine modification. Polar residues predominate over residues 1137–1155; the sequence is PLSSAGKQSQTKSSRMETV. Phosphoserine is present on residues serine 1140, serine 1162, serine 1166, serine 1176, serine 1182, and serine 1191. Residues 1156-1167 are compositionally biased toward low complexity; sequence SNASSSSNPSSP. Basic and acidic residues predominate over residues 1172–1184; sequence GRLDSSEMDHSEN. Basic and acidic residues-rich tracts occupy residues 1196-1214 and 1225-1243; these read KKSDKRDDSDLVRSELEKP and QEEKLGMDDLTKLVQEQKP. The span at 1245-1254 shows a compositional bias: basic residues; the sequence is GSQRSRKRGH. Residues 1249 to 1261 constitute a DNA-binding region (a.T hook 1); sequence SRKRGHTASESDE. Threonine 1255 carries the post-translational modification Phosphothreonine. Residues serine 1257 and serine 1259 each carry the phosphoserine modification. A compositionally biased stretch (basic and acidic residues) spans 1265-1274; the sequence is PEEKRLKEDI. Serine 1283 bears the Phosphoserine mark. The segment at residues 1287–1299 is a DNA-binding region (a.T hook 2); that stretch reads KGKRGRPPKPLGG. Over residues 1310-1319 the composition is skewed to basic residues; sequence TSKKGSKKKS. Phosphoserine is present on residues serine 1319 and serine 1334. Residues 1342 to 1353 show a composition bias toward basic residues; that stretch reads KSKQHRVSRRAQ. The segment covering 1355–1372 has biased composition (polar residues); that stretch reads RAESPESSAIESTQSTPQ. 2 positions are modified to phosphoserine: serine 1358 and serine 1366. Threonine 1367 bears the Phosphothreonine mark. Serine 1369 is subject to Phosphoserine. Phosphothreonine is present on residues threonine 1370 and threonine 1381. The segment at residues 1372-1384 is a DNA-binding region (a.T hook 3); it reads QKGRGRPSKTPSP. Positions 1379–1388 are enriched in low complexity; that stretch reads SKTPSPSQPK. Serine 1383 and serine 1417 each carry phosphoserine. Residues 1422 to 1432 are compositionally biased toward acidic residues; that stretch reads IPQEETEEEEV. A compositionally biased stretch (basic residues) spans 1437–1447; that stretch reads VRRRSAKRERR.

The protein belongs to the PDS5 family. Interacts with the cohesin complex. Interacts with RAD21; the interaction is direct. Interacts with WAPL (via FGF motifs) or CDCA5 (via the FGF motif); the interaction is direct, cohesin-dependent and competitive. As to expression, widely expressed.

Its subcellular location is the nucleus. Regulator of sister chromatid cohesion in mitosis which may stabilize cohesin complex association with chromatin. May couple sister chromatid cohesion during mitosis to DNA replication. Cohesion ensures that chromosome partitioning is accurate in both meiotic and mitotic cells and plays an important role in DNA repair. Plays a role in androgen-induced proliferative arrest in prostate cells. This chain is Sister chromatid cohesion protein PDS5 homolog B (PDS5B), found in Homo sapiens (Human).